We begin with the raw amino-acid sequence, 387 residues long: Alpha-sarcoglycan (387 aa).

An N-terminal signal peptide occupies residues 1-23 (MAATLTWILLFVGLLAGLRDTKA). Topologically, residues 24-290 (QQTTLYPLVG…ATGRDFLADA (267 aa)) are extracellular. Residues Asn174 and Asn246 are each glycosylated (N-linked (GlcNAc...) asparagine). Residues 291 to 311 (LVTLLVPLLVALLLTLLLAYI) form a helical membrane-spanning segment. Residues 312 to 387 (MCCRREGQLK…AQVPLILDQH (76 aa)) are Cytoplasmic-facing. Ser377 bears the Phosphoserine mark.

Belongs to the sarcoglycan alpha/epsilon family. Interacts with the syntrophin SNTA1. Cross-link to form 2 major subcomplexes: one consisting of SGCB, SGCD and SGCG and the other consisting of SGCB and SGCD. The association between SGCB and SGCG is particularly strong while SGCA is loosely associated with the other sarcoglycans. Strongly expressed in skeletal and heart muscle.

Its subcellular location is the cell membrane. The protein localises to the sarcolemma. It is found in the cytoplasm. It localises to the cytoskeleton. In terms of biological role, component of the sarcoglycan complex, a subcomplex of the dystrophin-glycoprotein complex which forms a link between the F-actin cytoskeleton and the extracellular matrix. In Mesocricetus auratus (Golden hamster), this protein is Alpha-sarcoglycan (SGCA).